A 350-amino-acid polypeptide reads, in one-letter code: 4-hydroxy-3-methylbut-2-en-1-yl diphosphate synthase (flavodoxin) (350 aa).

Positions 263, 266, 298, and 305 each coordinate [4Fe-4S] cluster.

Belongs to the IspG family. It depends on [4Fe-4S] cluster as a cofactor.

The catalysed reaction is (2E)-4-hydroxy-3-methylbut-2-enyl diphosphate + oxidized [flavodoxin] + H2O + 2 H(+) = 2-C-methyl-D-erythritol 2,4-cyclic diphosphate + reduced [flavodoxin]. The protein operates within isoprenoid biosynthesis; isopentenyl diphosphate biosynthesis via DXP pathway; isopentenyl diphosphate from 1-deoxy-D-xylulose 5-phosphate: step 5/6. Functionally, converts 2C-methyl-D-erythritol 2,4-cyclodiphosphate (ME-2,4cPP) into 1-hydroxy-2-methyl-2-(E)-butenyl 4-diphosphate. The protein is 4-hydroxy-3-methylbut-2-en-1-yl diphosphate synthase (flavodoxin) of Nautilia profundicola (strain ATCC BAA-1463 / DSM 18972 / AmH).